Consider the following 283-residue polypeptide: MKLKLKFLLISLLGSSLLLSACSSAATQVISSLSSAQKYFESSQGELNKKNVIKILKEGYESDANKAVHALLAGWKYTLMDQQLLSKEVDSRFIKAFGSGRDKGDVTPSVSEKGLYLNETYTGFSSQIAKVLGVQSQTVKQFNYKWSSNSDFKVQIQISMKGKVGSDSESQQLIKSFLSSDNNGSNQNGGVKETDFNGDSANFDGFFTFTYTPPTQSRKFGATSFDPLTTKINFPADLQIDVSTTHQKLNTLMEANEQVKQIKSRKFTGKTFDLLPFFYYALL.

The signal sequence occupies residues 1 to 21; that stretch reads MKLKLKFLLISLLGSSLLLSA. A lipid anchor (N-palmitoyl cysteine) is attached at C22. A lipid anchor (S-diacylglycerol cysteine) is attached at C22.

It belongs to the MG439/MG440 family.

The protein localises to the cell membrane. This is an uncharacterized protein from Mycoplasma pneumoniae (strain ATCC 29342 / M129 / Subtype 1) (Mycoplasmoides pneumoniae).